A 281-amino-acid polypeptide reads, in one-letter code: RAD52 motif-containing protein 1 (281 aa).

Residues 1–92 (MAELISFVVP…KPLFQTSPVK (92 aa)) form a necessary for nuclear localization and for nucleolar accumulation in response to heat shock region. Residues 15-98 (KVLLVWDLST…SPVKVRLGTR (84 aa)) enclose the RRM domain. Residues 90–133 (PVKVRLGTRHKALQHQAFALNSSRCQELANYYFGFSGWSKRIIK) form a necessary for nuclear and nucleolar localization region.

Homodimer.

It is found in the nucleus. Its subcellular location is the cytoplasm. The protein localises to the nucleolus. It localises to the cajal body. The protein resides in the PML body. May confer resistance to the antitumor agent cisplatin. Binds to DNA and RNA. This chain is RAD52 motif-containing protein 1 (Rdm1), found in Mus musculus (Mouse).